A 775-amino-acid chain; its full sequence is Putative ankyrin repeat protein RBE_0801 (775 aa).

6 ANK repeats span residues 66-95, 300-329, 331-356, 357-385, 447-476, and 523-552; these read HSLP…ENTE, ATTV…KVEN, ILQE…IKSF, TNDY…NIVG, IPDV…SFDF, and GDDK…KQGI.

This is Putative ankyrin repeat protein RBE_0801 from Rickettsia bellii (strain RML369-C).